A 773-amino-acid chain; its full sequence is Membrane-bound aldehyde dehydrogenase [pyrroloquinoline-quinone] (773 aa).

The tat-type signal signal peptide spans 1–44; sequence MGRLNRFRLGKDGRREQASLSRRGFLVTSLGAGVMFGFARPSSA.

Pyrroloquinoline quinone serves as cofactor. In terms of processing, predicted to be exported by the Tat system. The position of the signal peptide cleavage has been experimentally proven.

Its subcellular location is the cell inner membrane. It carries out the reaction an aldehyde + a quinone + H2O = a quinol + a carboxylate + H(+). The sequence is that of Membrane-bound aldehyde dehydrogenase [pyrroloquinoline-quinone] from Gluconacetobacter polyoxogenes (Acetobacter polyoxogenes).